Consider the following 305-residue polypeptide: UDP-3-O-acyl-N-acetylglucosamine deacetylase (305 aa).

Residues His-79, His-238, and Asp-242 each coordinate Zn(2+). His-265 (proton donor) is an active-site residue.

This sequence belongs to the LpxC family. Zn(2+) is required as a cofactor.

The enzyme catalyses a UDP-3-O-[(3R)-3-hydroxyacyl]-N-acetyl-alpha-D-glucosamine + H2O = a UDP-3-O-[(3R)-3-hydroxyacyl]-alpha-D-glucosamine + acetate. Its pathway is glycolipid biosynthesis; lipid IV(A) biosynthesis; lipid IV(A) from (3R)-3-hydroxytetradecanoyl-[acyl-carrier-protein] and UDP-N-acetyl-alpha-D-glucosamine: step 2/6. Its function is as follows. Catalyzes the hydrolysis of UDP-3-O-myristoyl-N-acetylglucosamine to form UDP-3-O-myristoylglucosamine and acetate, the committed step in lipid A biosynthesis. This Shigella boydii serotype 18 (strain CDC 3083-94 / BS512) protein is UDP-3-O-acyl-N-acetylglucosamine deacetylase.